A 151-amino-acid chain; its full sequence is Group 10 secretory phospholipase A2 (151 aa).

An N-terminal signal peptide occupies residues 1-17 (MLLLLLLLLLGPGPGFS). Residues 18 to 28 (EATRRSHVYKR) constitute a propeptide that is removed on maturation. 8 disulfide bridges follow: Cys-39/Cys-97, Cys-53/Cys-143, Cys-55/Cys-71, Cys-70/Cys-125, Cys-76/Cys-150, Cys-77/Cys-118, Cys-86/Cys-111, and Cys-104/Cys-116. Ca(2+) contacts are provided by Tyr-54, Gly-56, and Gly-58. Residue His-74 is part of the active site. Asp-75 is a Ca(2+) binding site. The active site involves Asp-119.

Belongs to the phospholipase A2 family. In terms of assembly, interacts with PLA2R1; this interaction mediates PLA2G10 clearance and inactivation. Ca(2+) is required as a cofactor. In terms of tissue distribution, expressed at high levels in testis and the gastrointestinal tract including stomach and colon. Expressed at lower levels in other tissues including small intestine, uterus, oviduct, lung, thymus, spleen and brain. Expressed in Paneth-like secretory epithelial cells of the colon. Expressed in gastric and ileac epithelial cells and in glandular epithelium of intestinal mucosa (at protein level). Expressed in late spermatogenic cells, spermatocytes and spermatids, but not spermatogonia in seminiferous tubules (at protein level). Expressed mainly in the apical side of endometrial epithelial cells and in the interstitium beneath the epithelium of uterus (at protein level). Expressed in resident spleen macrophages (at protein level). Expressed at outermost layer of hair follicles. Expressed in dorsal root ganglia in both NEFH-positive A-fibers and PRPH-positive C-fibers (at protein level).

Its subcellular location is the secreted. The protein localises to the lysosome. It is found in the cytoplasmic vesicle. The protein resides in the secretory vesicle. It localises to the acrosome. It catalyses the reaction a 1,2-diacyl-sn-glycero-3-phosphocholine + H2O = a 1-acyl-sn-glycero-3-phosphocholine + a fatty acid + H(+). It carries out the reaction 1-hexadecanoyl-2-(9Z-octadecenoyl)-sn-glycero-3-phosphocholine + H2O = 1-hexadecanoyl-sn-glycero-3-phosphocholine + (9Z)-octadecenoate + H(+). The catalysed reaction is 1-octadecanoyl-2-(5Z,8Z,11Z,14Z-eicosatetraenoyl)-sn-glycero-3-phosphocholine + H2O = 1-octadecanoyl-sn-glycero-3-phosphocholine + (5Z,8Z,11Z,14Z)-eicosatetraenoate + H(+). The enzyme catalyses 1,2-dihexadecanoyl-sn-glycero-3-phosphocholine + H2O = 1-hexadecanoyl-sn-glycero-3-phosphocholine + hexadecanoate + H(+). It catalyses the reaction 1-hexadecanoyl-2-(9Z-octadecenoyl)-sn-glycero-3-phosphoglycerol + H2O = 1-hexadecanoyl-sn-glycero-3-phosphoglycerol + (9Z)-octadecenoate + H(+). It carries out the reaction 1,2-dihexadecanoyl-sn-glycero-3-phospho-(1'-sn-glycerol) + H2O = 1-hexadecanoyl-sn-glycero-3-phospho-(1'-sn-glycerol) + hexadecanoate + H(+). The catalysed reaction is 1-hexadecanoyl-2-(9Z-octadecenoyl)-sn-glycero-3-phospho-L-serine + H2O = 1-hexadecanoyl-sn-glycero-3-phospho-L-serine + (9Z)-octadecenoate + H(+). The enzyme catalyses 1-hexadecanoyl-2-(9Z,12Z-octadecadienoyl)-sn-glycero-3-phosphoethanolamine + H2O = 1-hexadecanoyl-sn-glycero-3-phosphoethanolamine + (9Z,12Z)-octadecadienoate + H(+). It catalyses the reaction 1-hexadecanoyl-2-(9Z-octadecenoyl)-sn-glycero-3-phosphate + H2O = 1-hexadecanoyl-sn-glycero-3-phosphate + (9Z)-octadecenoate + H(+). It carries out the reaction 1-O-hexadecyl-2-acetyl-sn-glycero-3-phosphocholine + H2O = 1-O-hexadecyl-sn-glycero-3-phosphocholine + acetate + H(+). Functionally, secretory calcium-dependent phospholipase A2 that primarily targets extracellular phospholipids. Hydrolyzes the ester bond of the fatty acyl group attached at sn-2 position of phospholipids with preference for phosphatidylcholines and phosphatidylglycerols over phosphatidylethanolamines. Preferentially releases sn-2 omega-6 and omega-3 polyunsaturated fatty acyl (PUFA) chains over saturated fatty acyls. Contributes to phospholipid remodeling of very low-density lipoprotein (VLDL), low-density lipoprotein (LDL) and high-density lipoprotein (HDL) particles. Hydrolyzes LDL phospholipids releasing unsaturated fatty acids that regulate macrophage differentiation toward foam cells. Efficiently hydrolyzes and inactivates PAF, a potent lipid mediator present in oxidized LDL. May act in an autocrine and paracrine manner. Secreted by lung epithelium, targets membrane phospholipids of infiltrating eosinophils, releasing arachidonate and boosting eicosanoid and cysteinyl leukotriene synthesis involved in airway inflammatory response. Secreted by gut epithelium, hydrolyzes dietary and biliary phosphatidylcholines in the gastrointestinal lumen, thereby regulating adipogenesis and body weight. Plays a stem cell regulator role in colon epithelium. Within intracellular compartment, mediates Paneth-like cell differentiation and its stem cell supporting functions by inhibiting Wnt signaling pathway in intestinal stem cell (ISC). Secreted in the intestinal lumen upon inflammation, acts in an autocrine way and promotes prostaglandin E2 synthesis that stimulates the Wnt signaling pathway in ISCs and tissue regeneration. May participate in hair follicle morphogenesis by regulating phosphatidylethanolamines metabolism at the outermost epithelial layer and facilitating melanin synthesis. By generating lysophosphatidylcholines (LPCs) at sperm acrosome controls sperm cell capacitation, acrosome reaction and overall fertility. May promote neurite outgrowth in neuron fibers involved in nociception. Contributes to lipid remodeling of cellular membranes and generation of lipid mediators involved in pathogen clearance. Cleaves sn-2 fatty acyl chains of phosphatidylglycerols and phosphatidylethanolamines, which are major components of membrane phospholipids in bacteria. Displays bactericidal activity against Gram-positive bacteria by directly hydrolyzing phospholipids of the bacterial membrane. In pulmonary epithelium, may contribute to host defense response against adenoviral infection. Prevents adenovirus entry into host cells by hydrolyzing host cell plasma membrane, releasing C16:0 LPCs that inhibit virus-mediated membrane fusion and viral infection. Likely prevents adenoviral entry into the endosomes of host cells. May play a role in maturation and activation of innate immune cells including macrophages, group 2 innate lymphoid cells and mast cells. The protein is Group 10 secretory phospholipase A2 (Pla2g10) of Mus musculus (Mouse).